A 353-amino-acid polypeptide reads, in one-letter code: Uroporphyrinogen decarboxylase (353 aa).

Substrate contacts are provided by residues 27–31 (RQAGR), F46, D76, Y152, S207, and H321.

The protein belongs to the uroporphyrinogen decarboxylase family. As to quaternary structure, homodimer.

It localises to the cytoplasm. The enzyme catalyses uroporphyrinogen III + 4 H(+) = coproporphyrinogen III + 4 CO2. Its pathway is porphyrin-containing compound metabolism; protoporphyrin-IX biosynthesis; coproporphyrinogen-III from 5-aminolevulinate: step 4/4. In terms of biological role, catalyzes the decarboxylation of four acetate groups of uroporphyrinogen-III to yield coproporphyrinogen-III. This Listeria monocytogenes serotype 4b (strain CLIP80459) protein is Uroporphyrinogen decarboxylase.